A 547-amino-acid polypeptide reads, in one-letter code: CTP synthase (547 aa).

The tract at residues 1–265 (MARYVFITGG…DQAVLDAFGI (265 aa)) is amidoligase domain. Ser13 contributes to the CTP binding site. UTP is bound at residue Ser13. ATP-binding positions include 14-19 (SLGKGL) and Asp71. Mg(2+)-binding residues include Asp71 and Glu139. CTP is bound by residues 146-148 (DIE), 186-191 (KTKPTQ), and Lys222. UTP is bound by residues 186 to 191 (KTKPTQ) and Lys222. In terms of domain architecture, Glutamine amidotransferase type-1 spans 291–546 (RVAIVGKYTQ…VRAAVEVSRL (256 aa)). Residue Gly353 participates in L-glutamine binding. Cys380 functions as the Nucleophile; for glutamine hydrolysis in the catalytic mechanism. L-glutamine-binding positions include 381–384 (LGMQ), Glu404, and Arg474. Residues His519 and Glu521 contribute to the active site.

The protein belongs to the CTP synthase family. In terms of assembly, homotetramer.

It catalyses the reaction UTP + L-glutamine + ATP + H2O = CTP + L-glutamate + ADP + phosphate + 2 H(+). It carries out the reaction L-glutamine + H2O = L-glutamate + NH4(+). The catalysed reaction is UTP + NH4(+) + ATP = CTP + ADP + phosphate + 2 H(+). It participates in pyrimidine metabolism; CTP biosynthesis via de novo pathway; CTP from UDP: step 2/2. Allosterically activated by GTP, when glutamine is the substrate; GTP has no effect on the reaction when ammonia is the substrate. The allosteric effector GTP functions by stabilizing the protein conformation that binds the tetrahedral intermediate(s) formed during glutamine hydrolysis. Inhibited by the product CTP, via allosteric rather than competitive inhibition. Its function is as follows. Catalyzes the ATP-dependent amination of UTP to CTP with either L-glutamine or ammonia as the source of nitrogen. Regulates intracellular CTP levels through interactions with the four ribonucleotide triphosphates. This Cereibacter sphaeroides (strain ATCC 17029 / ATH 2.4.9) (Rhodobacter sphaeroides) protein is CTP synthase.